A 490-amino-acid polypeptide reads, in one-letter code: MHHCKRYRSPEPDPYLSYRWKRRRSYSREHEGRLRYPSRREPPPRRSRSRSHDRIPYQRRYREHRDSDTYRCEERSPSFGEDCYGSSRSRHRRRSRERGPYRTRKHAHHCHKRRTRSCSSASSRSQQSSKRSSRSVEDDKEGHLVCRIGDWLQERYEIVGNLGEGTFGKVVECLDHARGKSQVALKIIRNVGKYREAARLEINVLKKIKEKDKENKFLCVLMSDWFNFHGHMCIAFELLGKNTFEFLKENNFQPYPLPHVRHMAYQLCHALRFLHENQLTHTDLKPENILFVNSEFETLYNEHKSCEEKSVKNTSIRVADFGSATFDHEHHTTIVATRHYRPPEVILELGWAQPCDVWSIGCILFEYYRGFTLFQTHENREHLVMMEKILGPIPSHMIHRTRKQKYFYKGGLVWDENSSDGRYVKENCKPLKSYMLQDSLEHVQLFDLMRRMLEFDPAQRITLAEALLHPFFAGLTPEERSFHSSRNPSR.

A disordered region spans residues 1–138 (MHHCKRYRSP…SKRSSRSVED (138 aa)). Tyr7 carries the post-translational modification Phosphotyrosine. A phosphoserine mark is found at Ser9, Ser49, Ser51, Ser67, Ser76, and Ser78. Basic and acidic residues-rich tracts occupy residues 26–56 (YSRE…DRIP) and 63–76 (EHRD…EERS). Residues 88–116 (RSRHRRRSRERGPYRTRKHAHHCHKRRTR) are compositionally biased toward basic residues. Residues 117–130 (SCSSASSRSQQSSK) show a composition bias toward low complexity. A Phosphoserine modification is found at Ser135. One can recognise a Protein kinase domain in the interval 156–472 (YEIVGNLGEG…LAEALLHPFF (317 aa)). ATP-binding positions include 162–170 (LGEGTFGKV) and Lys186. Asp283 acts as the Proton acceptor in catalysis.

Belongs to the protein kinase superfamily. CMGC Ser/Thr protein kinase family. Lammer subfamily. Autophosphorylates on all three types of residues.

Its subcellular location is the nucleus. The protein localises to the cytoplasm. It localises to the cytoplasmic vesicle. It is found in the secretory vesicle. The protein resides in the acrosome. The enzyme catalyses L-seryl-[protein] + ATP = O-phospho-L-seryl-[protein] + ADP + H(+). The catalysed reaction is L-threonyl-[protein] + ATP = O-phospho-L-threonyl-[protein] + ADP + H(+). It catalyses the reaction L-tyrosyl-[protein] + ATP = O-phospho-L-tyrosyl-[protein] + ADP + H(+). With respect to regulation, leucettine L41 inhibits its kinase activity and affects the regulation of alternative splicing mediated by phosphorylation of SR proteins. Its function is as follows. Dual specificity kinase acting on both serine/threonine and tyrosine-containing substrates. Phosphorylates serine- and arginine-rich (SR) proteins of the spliceosomal complex. May be a constituent of a network of regulatory mechanisms that enable SR proteins to control RNA splicing and can cause redistribution of SR proteins from speckles to a diffuse nucleoplasmic distribution. Phosphorylates SRSF1 and SRSF3. Regulates the alternative splicing of tissue factor (F3) pre-mRNA in endothelial cells. This Rattus norvegicus (Rat) protein is Dual specificity protein kinase CLK3 (Clk3).